The chain runs to 198 residues: MRKSKRERQRLLQETIRENPFVTDEELAEKFSVSVQTIRLDRLELSIPELRERIKHVARQSFADKVRALPLEEVIGDIIDIEPDASAISIFDVKEEHVFRRTRIARGHHLFAQANSLAVAVIHDELALTAKATIRFVRQVKAGERVVAKAKVTGKTKSGRTVVDVNSYVGQELVFSGTFEMYRSNMEKKDGDSNEYRD.

In terms of domain architecture, MaoC-like spans 102–168; it reads TRIARGHHLF…GRTVVDVNSY (67 aa).

This sequence belongs to the FapR family.

Its function is as follows. Transcriptional factor involved in regulation of membrane lipid biosynthesis by repressing genes involved in fatty acid and phospholipid metabolism. This chain is Transcription factor FapR, found in Geobacillus thermodenitrificans (strain NG80-2).